The following is a 574-amino-acid chain: Acyloxyacyl hydrolase (574 aa).

A signal peptide spans 1-22 (MKFPWKVFKTTLLLLLLSHSLA). The propeptide occupies 23-33 (SVPSEDQPGDS). In terms of domain architecture, Saposin B-type spans 36–117 (HGQSCLGCVV…YALEFCKRGA (82 aa)). The tract at residues 37-69 (GQSCLGCVVLVSVIEQLAEVHNSSVQVAMERLC) is important for enzyme activity, localization to cytoplasmic vesicles, and protein stability. Cystine bridges form between Cys40/Cys113, Cys43/Cys107, Cys69/Cys82, Cys122/Cys452, Cys159/Cys168, Cys205/Cys229, Cys248/Cys328, and Cys375/Cys458. Asn58 carries an N-linked (GlcNAc...) asparagine glycan. The lipopolysaccharide binding stretch occupies residues 172 to 176 (ELSIK). 15 residues coordinate Ca(2+): Asp183, Asp185, Asp187, His189, Asp204, Asn206, Asp207, Asp209, Val212, Asp222, Asp226, Asn228, Asn230, Ile232, and Glu244. Asn206 is a glycosylation site (N-linked (GlcNAc...) asparagine). Residue Ser262 is part of the active site. Asn408 and Asn465 each carry an N-linked (GlcNAc...) asparagine glycan.

Heterodimer of the large and small subunits; disulfide-linked. Ca(2+) is required as a cofactor. Cleaved into a large and a small subunit. Post-translationally, the small subunit is N-glycosylated. Detected in peritoneal macrophages (at protein level). Strongly expressed in kidney cortex, where it may be produced by proximal tubule cells. In liver, expressed at high levels in Kupffer cells. Expressed by dendritic cells. Detected at low levels in alveolar macrophages.

Its subcellular location is the secreted. It localises to the cytoplasmic vesicle. It catalyses the reaction a 3-(acyloxy)acyl derivative of bacterial toxin + H2O = a 3-hydroxyacyl derivative of bacterial toxin + a fatty acid + H(+). Functionally, removes the secondary (acyloxyacyl-linked) fatty acyl chains from the lipid A region of bacterial lipopolysaccharides (LPS). By breaking down LPS, terminates the host response to bacterial infection and prevents prolonged and damaging inflammatory responses. In peritoneal macrophages, seems to be important for recovery from a state of immune tolerance following infection by Gram-negative bacteria. The polypeptide is Acyloxyacyl hydrolase (Mus musculus (Mouse)).